We begin with the raw amino-acid sequence, 601 residues long: MSNQVPLKRLFKVILVIRCVQALLTRTFFQADEFWQSLEPAHYMAFGYGELTWEWSFGLRSYAFPLIFQIGYTLVKYAAISCELIVQTATDWVLLFVANVIPNSEFGWEMVQEMRSFPEEIRGFIEYQGVIYAPKLIMAVLAAIGEFHVILLAEKLYKLTMDKSDDSKGSDKKHSTVINFTLVATVSNFFNCFFITRSFINSFEMILTSVSLYYWDWTSGEHIESFDFLKSLIIGTFTVLQRPTNAFIWLILGGYMILNLVLSKRWRKLFSLLIKVICASFISISTNLCIDYYFYGYITIPVLKFIKFNCTSSLSKFYGVAPWNFHVFQSLPIVAGYSLPLLIHSFFCSLTKKRFLSPLVNPFLQIKTVVLLNVILYSLIPHKEFRFIYPLQPFFIILSVFDGIWLLQKYGSTATTRTMEFFSQVMWILPVVSMVASMLLSTLHESGTVAVMDYLHSIRNIDSIGFIMPCHSTPWQSHFHRNDVKELWAITCSPPLHLLTDPDANAKLPFYMDESDYLYDNISKFMYQHFPPVFRKSLRSPGKQYTYEWPEYLVIFEDLDSQFMNDYLVDSMYIEETRFFNSLVHWDKRRSGDIIIYHKMP.

5 consecutive transmembrane segments (helical) span residues 66 to 86, 133 to 153, 176 to 196, 243 to 263, and 270 to 290; these read LIFQIGYTLVKYAAISCELIV, APKLIMAVLAAIGEFHVILLA, TVINFTLVATVSNFFNCFFIT, PTNAFIWLILGGYMILNLVLS, and FSLLIKVICASFISISTNLCI. Asn-309 carries an N-linked (GlcNAc...) asparagine glycan. 4 helical membrane-spanning segments follow: residues 327 to 347, 360 to 380, 387 to 407, and 421 to 441; these read VFQSLPIVAGYSLPLLIHSFF, VNPFLQIKTVVLLNVILYSLI, FIYPLQPFFIILSVFDGIWLL, and FFSQVMWILPVVSMVASMLLS. N-linked (GlcNAc...) asparagine glycosylation is present at Asn-521.

This sequence belongs to the glycosyltransferase 22 family. PIGB subfamily.

It is found in the endoplasmic reticulum membrane. It functions in the pathway glycolipid biosynthesis; glycosylphosphatidylinositol-anchor biosynthesis. Functionally, mannosyltransferase involved in glycosylphosphatidylinositol-anchor biosynthesis. Transfers the third mannose to Man2-GlcN-acyl-PI during GPI precursor assembly. The protein is GPI mannosyltransferase 3 (GPI10) of Kluyveromyces lactis (strain ATCC 8585 / CBS 2359 / DSM 70799 / NBRC 1267 / NRRL Y-1140 / WM37) (Yeast).